A 350-amino-acid polypeptide reads, in one-letter code: Proton-activated chloride channel (350 aa).

The interval 1-51 (MEAIRKELSRSYQELNDETDPIARDPEGAQEEEQEEAASAVVPDRDSDRSN) is disordered. The Cytoplasmic portion of the chain corresponds to 1-63 (MEAIRKELSR…VHFSRTCLKN (63 aa)). The chain crosses the membrane as a helical span at residues 64 to 84 (VFSVLLIFVYLLLMGVAVFLV). The Extracellular portion of the chain corresponds to 85–297 (YQTITDFRDK…KDPYIQEIQD (213 aa)). The chain crosses the membrane as a helical span at residues 298-318 (IITANPWSMIALLCSVFLVLF). Residues 319-350 (KAADFAKLSVKWMIKVRRRHLKKRTRELNHIS) lie on the Cytoplasmic side of the membrane.

This sequence belongs to the proton-activated chloride channel family.

The protein resides in the cell membrane. The catalysed reaction is chloride(in) = chloride(out). Its function is as follows. Chloride channel gated by pH that facilitates the entry of chloride ions into cells upon exposure to extracellular acidic pH. This Xenopus laevis (African clawed frog) protein is Proton-activated chloride channel.